The sequence spans 33 residues: Mu-theraphotoxin-Ssp1a (33 aa).

Cystine bridges form between Cys2-Cys17, Cys9-Cys22, and Cys16-Cys29. The residue at position 33 (Leu33) is a Leucine amide.

It belongs to the neurotoxin 10 (Hwtx-1) family. 22 (Htx-4) subfamily. As to expression, expressed by the venom gland.

It localises to the secreted. Functionally, gating modifier toxin that traps voltage-sensing domain II of voltage-gated sodium channels in the resting state without significantly altering the voltage-dependence of activation and inactivation, or delay in recovery from inactivation. Inhibits hNav1.7/SCN9A (IC(50)=134 nM), followed in rank order of potency by Nav1.6/SCN8A (IC(50)=191 nM), Nav1.2/SCN2A (IC(50)=239 nM), Nav1.3/SCN3A (IC(50)=547 nM) and Nav1.1/SCN1A (IC(50)=674 nM). Its binding to Nav1.2, Nav1.3 and Nav1.7 is slowly reversible and incomplete, with ~25% of Nav1.2, ~50% of Nav1.3 and ~40% of Nav1.7 channels recovering from block after a 30 minutes washout, respectively. Binds in the aqueous cleft formed between the S1-S2 and S3-S4 loops of each channel subtype, primarily targeting the S3-S4 loop. In Selenotypus sp. (Feather-legged tarantula), this protein is Mu-theraphotoxin-Ssp1a.